The chain runs to 156 residues: MRRRRAPIREVMPDPIYGSKVVTKFINKLMWDGKKSTAQKIFYNALKLIEEKDKEAKGIDIFNEAIENVKPLLEVKSRRVGGATYQVPVEVRPVRQQSLAIRWIVDAARNRNERTMAERLANELLDAANKRGAAYKKKEDTYKMAEANKAFAHYRW.

The protein belongs to the universal ribosomal protein uS7 family. As to quaternary structure, part of the 30S ribosomal subunit. Contacts proteins S9 and S11.

Its function is as follows. One of the primary rRNA binding proteins, it binds directly to 16S rRNA where it nucleates assembly of the head domain of the 30S subunit. Is located at the subunit interface close to the decoding center, probably blocks exit of the E-site tRNA. The sequence is that of Small ribosomal subunit protein uS7 from Nitratiruptor sp. (strain SB155-2).